The sequence spans 520 residues: Bifunctional purine biosynthesis protein PurH (520 aa).

Residues 1–150 (MSDDRKAIKR…KNHPSVAVVV (150 aa)) form the MGS-like domain.

The protein belongs to the PurH family.

It carries out the reaction (6R)-10-formyltetrahydrofolate + 5-amino-1-(5-phospho-beta-D-ribosyl)imidazole-4-carboxamide = 5-formamido-1-(5-phospho-D-ribosyl)imidazole-4-carboxamide + (6S)-5,6,7,8-tetrahydrofolate. It catalyses the reaction IMP + H2O = 5-formamido-1-(5-phospho-D-ribosyl)imidazole-4-carboxamide. It participates in purine metabolism; IMP biosynthesis via de novo pathway; 5-formamido-1-(5-phospho-D-ribosyl)imidazole-4-carboxamide from 5-amino-1-(5-phospho-D-ribosyl)imidazole-4-carboxamide (10-formyl THF route): step 1/1. The protein operates within purine metabolism; IMP biosynthesis via de novo pathway; IMP from 5-formamido-1-(5-phospho-D-ribosyl)imidazole-4-carboxamide: step 1/1. This chain is Bifunctional purine biosynthesis protein PurH, found in Corynebacterium glutamicum (strain R).